The following is an 872-amino-acid chain: Valine--tRNA ligase (872 aa).

The 'HIGH' region signature appears at 46-56 (PNVTGKLHIGH). A 'KMSKS' region motif is present at residues 523 to 527 (KMSKS). Residue Lys-526 participates in ATP binding. Residues 796–872 (IEIANDSFIN…KDKLKELTND (77 aa)) are a coiled coil.

The protein belongs to the class-I aminoacyl-tRNA synthetase family. ValS type 1 subfamily. Monomer.

The protein resides in the cytoplasm. It carries out the reaction tRNA(Val) + L-valine + ATP = L-valyl-tRNA(Val) + AMP + diphosphate. Catalyzes the attachment of valine to tRNA(Val). As ValRS can inadvertently accommodate and process structurally similar amino acids such as threonine, to avoid such errors, it has a 'posttransfer' editing activity that hydrolyzes mischarged Thr-tRNA(Val) in a tRNA-dependent manner. This chain is Valine--tRNA ligase, found in Mycoplasma mycoides subsp. mycoides SC (strain CCUG 32753 / NCTC 10114 / PG1).